The chain runs to 467 residues: Protein PHOSPHATE STARVATION RESPONSE 3 (467 aa).

A disordered region spans residues 227–266; it reads MSLPVSSCSDQEDLQDARSPAKVQLSSSRSSSGTASCNKP. The 61-residue stretch at 262–322 folds into the HTH myb-type domain; that stretch reads SCNKPRLRWT…HLQKYRLAKY (61 aa). The segment at residues 293–318 is a DNA-binding region (H-T-H motif); it reads PKGVLKLMKVEGLTIYHIKSHLQKYR. The span at 327–337 shows a compositional bias: basic and acidic residues; it reads KEDKKQEEKKT. Disordered stretches follow at residues 327 to 353 and 400 to 467; these read KEDKKQEEKKTKSVANGNDHAKKKSAQ and RESI…VHDE. Over residues 402 to 412 the composition is skewed to polar residues; the sequence is SISSMTSTTEG. 2 stretches are compositionally biased toward basic and acidic residues: residues 419-428 and 438-467; these read PMEKTEDKAE and RITDTDAECHSKVDNKKTKPQADLEMVHDE.

In terms of tissue distribution, expressed in the root cap and in the exodermis of the root, in the root tip of lateral roots, in the mesophyll cells of the leaf, in pollen, vascular cylinder of the anther and the veins of the lemma, palea and pistils, and in the xylem and phloem regions of large vascular bundles, small vascular bundles and diffuse vascular bundles in node I.

Its subcellular location is the nucleus. Transcription factor involved in phosphate starvation signaling. Binds to P1BS, an imperfect palindromic sequence 5'-GNATATNC-3', to promote the expression of inorganic phosphate (Pi) starvation-responsive genes. Functionally redundant with PHR1 and PHR2 in regulating Pi starvation response and Pi homeostasis. The polypeptide is Protein PHOSPHATE STARVATION RESPONSE 3 (Oryza sativa subsp. japonica (Rice)).